A 106-amino-acid polypeptide reads, in one-letter code: Small ribosomal subunit protein uS10 (106 aa).

Belongs to the universal ribosomal protein uS10 family. As to quaternary structure, part of the 30S ribosomal subunit.

Its function is as follows. Involved in the binding of tRNA to the ribosomes. The sequence is that of Small ribosomal subunit protein uS10 from Synechococcus sp. (strain WH7803).